The primary structure comprises 394 residues: Phosphopentomutase (394 aa).

Positions 14, 287, 292, 328, 329, and 340 each coordinate Mn(2+).

Belongs to the phosphopentomutase family. Requires Mn(2+) as cofactor.

Its subcellular location is the cytoplasm. It catalyses the reaction 2-deoxy-alpha-D-ribose 1-phosphate = 2-deoxy-D-ribose 5-phosphate. The enzyme catalyses alpha-D-ribose 1-phosphate = D-ribose 5-phosphate. It participates in carbohydrate degradation; 2-deoxy-D-ribose 1-phosphate degradation; D-glyceraldehyde 3-phosphate and acetaldehyde from 2-deoxy-alpha-D-ribose 1-phosphate: step 1/2. Functionally, isomerase that catalyzes the conversion of deoxy-ribose 1-phosphate (dRib-1-P) and ribose 1-phosphate (Rib-1-P) to deoxy-ribose 5-phosphate (dRib-5-P) and ribose 5-phosphate (Rib-5-P), respectively. In Listeria welshimeri serovar 6b (strain ATCC 35897 / DSM 20650 / CCUG 15529 / CIP 8149 / NCTC 11857 / SLCC 5334 / V8), this protein is Phosphopentomutase.